Consider the following 99-residue polypeptide: uncharacterized protein (99 aa).

Residues 32-79 form the TM2 domain; the sequence is KKSVGIAVLLSFIIPGAGQMYLGRVGKGIILLLTCWLIIPWIYSIYDA. 2 consecutive transmembrane segments (helical) span residues 34–54 and 56–76; these read SVGI…MYLG and VGKG…IYSI.

The protein resides in the cell membrane. This is an uncharacterized protein from Methanocaldococcus jannaschii (strain ATCC 43067 / DSM 2661 / JAL-1 / JCM 10045 / NBRC 100440) (Methanococcus jannaschii).